The chain runs to 297 residues: MATH domain and coiled-coil domain-containing protein At2g05420 (297 aa).

One can recognise an MATH domain in the interval 7–139; the sequence is SKTITWVIEN…NGELTLVAKV (133 aa). Residues 239–281 adopt a coiled-coil conformation; it reads KLDWLEKKHGEIKEKKKKEEASLKRLQEMEKQIFNEAQIYKEK.

The protein is MATH domain and coiled-coil domain-containing protein At2g05420 of Arabidopsis thaliana (Mouse-ear cress).